A 616-amino-acid polypeptide reads, in one-letter code: GPI mannosyltransferase 3 (616 aa).

At 1 to 16 (MAHEVHRIKPKLGRTQ) the chain is on the cytoplasmic side. Residues 17-37 (IFWVFLAFRVLNAVLTRTFFQ) form a helical membrane-spanning segment. Over 38–86 (ADEFWQALEPAHWKAFKYGELTWEWKFGVRSYLFPMIFELTYRLVSLSS) the chain is Lumenal. A helical transmembrane segment spans residues 87–107 (ILLHYALLLLSTIGSDLLILL). The Cytoplasmic portion of the chain corresponds to 108–136 (LPKYELSWQVAEDLKRLPFDVTRSFEYYG). A helical transmembrane segment spans residues 137–157 (VIYAPKIVMAVLASIGEYYIV). At 158 to 188 (RFVQKLYLLTLDKRNEKEEEERRSGLSEITK) the chain is on the lumenal side. Residues 189-209 (FALLLSLTNFFNCFFITRTFI) form a helical membrane-spanning segment. Residues 210-240 (NSFEMILTSIALYYWDWTGGQMIKESSFTKS) are Cytoplasmic-facing. A helical transmembrane segment spans residues 241 to 261 (LIFAFLACLQRPSSGLIWVIP). Topologically, residues 262–278 (SISLILNLVGKKQYHLL) are lumenal. The chain crosses the membrane as a helical span at residues 279-299 (FITFSKVLRSFFLVFTANAII). The Cytoplasmic portion of the chain corresponds to 300–338 (DMYFYEKVTFPFFRFLKFNFTTPLSKFYGVAPWHFHFFQ). A helical membrane pass occupies residues 339–359 (SLPIVLGASIPAFAFGLFFPL). The Lumenal portion of the chain corresponds to 360 to 392 (SKRSFPKKYLNPFFQVKLTILLNLLVYSTLPHK). A helical transmembrane segment spans residues 393–413 (EFRFIFPLQPLFILISSFGLL). Residues 414–423 (RLDRDYWKRL) lie on the Cytoplasmic side of the membrane. Residues 424–444 (SGLKSLLWLVPFVSVFIALLL) traverse the membrane as a helical segment. Topologically, residues 445 to 616 (DTFHESGSIE…DYSDIPAADI (172 aa)) are lumenal.

Belongs to the glycosyltransferase 22 family. PIGB subfamily.

The protein resides in the endoplasmic reticulum membrane. Its pathway is glycolipid biosynthesis; glycosylphosphatidylinositol-anchor biosynthesis. Its function is as follows. Mannosyltransferase involved in glycosylphosphatidylinositol-anchor biosynthesis. Transfers the third mannose to Man2-GlcN-acyl-PI during GPI precursor assembly. The sequence is that of GPI mannosyltransferase 3 (GPI10) from Saccharomyces cerevisiae (strain ATCC 204508 / S288c) (Baker's yeast).